The primary structure comprises 141 residues: Hemoglobin subunit alpha-A (141 aa).

The region spanning 1–141 (VLSPADKSNV…VGTVLTAKYR (141 aa)) is the Globin domain. His58 provides a ligand contact to O2. His87 contacts heme b.

This sequence belongs to the globin family. As to quaternary structure, heterotetramer of two alpha chains and two beta chains. Red blood cells.

Its function is as follows. Involved in oxygen transport from the lung to the various peripheral tissues. The protein is Hemoglobin subunit alpha-A (HBAA) of Passer montanus (Eurasian tree sparrow).